A 1276-amino-acid polypeptide reads, in one-letter code: Component of gems protein 5 (1276 aa).

The interval 53–55 is interaction with U4 snRNA; sequence NWY. 8 WD repeats span residues 92-139, 183-223, 228-268, 271-336, 364-405, 438-481, 485-522, and 530-574; these read GHTD…DDHN, EHKA…VFPI, GNNI…TVCK, AHSA…IESG, NDKQ…SPPE, TTKN…IKIQ, GFVY…KDAY, and GIQS…SKIF. The tract at residues 138–157 is disordered; sequence HNEDTEIGDDFKHGSGGGGS. Residues 586–652 form a disordered region; the sequence is IWKPPPTPTP…NSNNEQQPNK (67 aa). Residues 598-646 show a composition bias toward low complexity; sequence NINNNNNNNNNNNNNNNNNNNNNNNNNNNNNNNNNNNNINNNNNNNSNN. WD repeat units lie at residues 688-727 and 729-771; these read TFSK…LTRI and EHKK…NQNE. The segment covering 772–793 has biased composition (basic and acidic residues); that stretch reads NEKKIDNEKGKENENEKGKENE. A disordered region spans residues 772 to 809; it reads NEKKIDNEKGKENENEKGKENENENENENENENENENE. Positions 778 to 829 form a coiled coil; it reads NEKGKENENEKGKENENENENENENENENENENEIENIVNNNNENDTEIEIK. Residues 794 to 809 show a composition bias toward acidic residues; the sequence is NENENENENENENENE. WD repeat units lie at residues 863–903 and 906–946; these read GHKN…AISN and GHDG…FKTV. Residues 967–997 are disordered; it reads ITEQQQQQQQPQSPIKSNPDQSNNPSLVPPI. Residues 979 to 992 show a composition bias toward polar residues; the sequence is SPIKSNPDQSNNPS.

Belongs to the WD repeat gemin-5 family. As to quaternary structure, part of the core SMN complex.

It is found in the nucleus. Its subcellular location is the nucleoplasm. It localises to the gem. The protein resides in the cytoplasm. Functionally, the SMN complex catalyzes the assembly of small nuclear ribonucleoproteins (snRNPs), the building blocks of the spliceosome, and thereby plays an important role in the splicing of cellular pre-mRNAs. Most spliceosomal snRNPs contain a common set of Sm proteins SNRPB, SNRPD1, SNRPD2, SNRPD3, SNRPE, SNRPF and SNRPG that assemble in a heptameric protein ring on the Sm site of the small nuclear RNA to form the core snRNP (Sm core). In the cytosol, the Sm proteins SNRPD1, SNRPD2, SNRPE, SNRPF and SNRPG are trapped in an inactive 6S pICln-Sm complex by the chaperone CLNS1A that controls the assembly of the core snRNP. To assemble core snRNPs, the SMN complex accepts the trapped 5Sm proteins from CLNS1A forming an intermediate. Binding of snRNA inside 5Sm ultimately triggers eviction of the SMN complex, thereby allowing binding of SNRPD3 and SNRPB to complete assembly of the core snRNP. Within the SMN complex, GEMIN5 recognizes and delivers the small nuclear RNAs (snRNAs) to the SMN complex. Binds to the 7-methylguanosine cap of RNA molecules. The chain is Component of gems protein 5 (gemin5) from Dictyostelium discoideum (Social amoeba).